The sequence spans 687 residues: RNA-binding protein VTS1 (687 aa).

Basic residues predominate over residues 1 to 10 (MASHTLRPHR). Disordered stretches follow at residues 1-115 (MASH…TPEA), 248-341 (AAAK…PGIG), and 526-598 (SPFN…AGVA). A compositionally biased stretch (polar residues) spans 29 to 41 (TRQSLGPPTSGNS). Low complexity predominate over residues 52–68 (GLASPSSPSQPRHVSSS). Polar residues predominate over residues 287 to 301 (GLESNMSGRSRSKSP). The span at 305-324 (PRPKSTDFSGKPRESLRRES) shows a compositional bias: basic and acidic residues. The segment covering 526–539 (SPFNASAPSLQPGL) has biased composition (polar residues). Over residues 550-566 (QSSHLNQHYNQHQQQHQ) the composition is skewed to low complexity. A compositionally biased stretch (gly residues) spans 585–597 (QTGGGGAGGGAGV). Positions 606–667 (KVLEDVPNWL…LKVFYNVRTK (62 aa)) constitute an SAM domain.

Belongs to the VTS1 family. As to quaternary structure, monomer. Binds to RNA.

It localises to the cytoplasm. The protein localises to the cytosol. It is found in the P-body. In terms of biological role, RNA-binding protein involved in post-transcriptional regulation through transcript degradation. In Cryptococcus neoformans var. grubii serotype A (strain H99 / ATCC 208821 / CBS 10515 / FGSC 9487) (Filobasidiella neoformans var. grubii), this protein is RNA-binding protein VTS1.